The primary structure comprises 214 residues: Protein GrpE (214 aa).

Polar residues predominate over residues 1 to 13 (MKHTSEPTSQPDT). The tract at residues 1–61 (MKHTSEPTSQ…AAVAEATIEP (61 aa)) is disordered. Residues 14–57 (QAAESAQSSAAAAGQAASAYSSQAQRASADAQAIAGDEAAVAEA) are compositionally biased toward low complexity.

This sequence belongs to the GrpE family. As to quaternary structure, homodimer.

The protein localises to the cytoplasm. In terms of biological role, participates actively in the response to hyperosmotic and heat shock by preventing the aggregation of stress-denatured proteins, in association with DnaK and GrpE. It is the nucleotide exchange factor for DnaK and may function as a thermosensor. Unfolded proteins bind initially to DnaJ; upon interaction with the DnaJ-bound protein, DnaK hydrolyzes its bound ATP, resulting in the formation of a stable complex. GrpE releases ADP from DnaK; ATP binding to DnaK triggers the release of the substrate protein, thus completing the reaction cycle. Several rounds of ATP-dependent interactions between DnaJ, DnaK and GrpE are required for fully efficient folding. This is Protein GrpE from Ralstonia nicotianae (strain ATCC BAA-1114 / GMI1000) (Ralstonia solanacearum).